Consider the following 318-residue polypeptide: Olfactory receptor 51E1 (318 aa).

The Extracellular portion of the chain corresponds to 1-31 (MMVDPNGNESSATYFILIGLPGLEEAQFWLA). Asparagine 8 is a glycosylation site (N-linked (GlcNAc...) asparagine). Residues 32 to 52 (FPLCSLYLIAVLGNLTIIYIV) traverse the membrane as a helical segment. The Cytoplasmic portion of the chain corresponds to 53–60 (RTEHSLHE). The chain crosses the membrane as a helical span at residues 61–81 (PMYIFLCMLSGIDILISTSSM). Over 82–100 (PKMLAIFWFNSTTIQFDAC) the chain is Extracellular. Asparagine 91 carries an N-linked (GlcNAc...) asparagine glycan. A disulfide bridge links cysteine 100 with cysteine 182. The chain crosses the membrane as a helical span at residues 101-123 (LLQMFAIHSLSGMESTVLLAMAF). The Cytoplasmic segment spans residues 124–145 (DRYVAICHPLRHATVLTLPRVT). A helical membrane pass occupies residues 146-166 (KIGVAAVVRGAALMAPLPVFI). Topologically, residues 167–198 (KQLPFCRSNILSHSYCLHQDVMKLACDDIRVN) are extracellular. Residues 199–219 (VVYGLIVIISAIGLDSLLISF) traverse the membrane as a helical segment. The Cytoplasmic portion of the chain corresponds to 220-239 (SYLLILKTVLGLTREAQAKA). Residues 240 to 260 (FGTCVSHVCAVFIFYVPFIGL) traverse the membrane as a helical segment. Residues 261–275 (SMVHRFSKRRDSPLP) are Extracellular-facing. The helical transmembrane segment at 276–296 (VILANIYLLVPPVLNPIVYGV) threads the bilayer. The Cytoplasmic segment spans residues 297–318 (KTKEIRQRILRLFHVATHASEP).

This sequence belongs to the G-protein coupled receptor 1 family. Highly expressed in prostate. Very low levels may be detected in some other tissues, such as placenta, skeletal muscle, heart, ovary and testis. Up-regulated in prostate cancers.

Its subcellular location is the cell membrane. Functionally, odorant receptor. In Homo sapiens (Human), this protein is Olfactory receptor 51E1 (OR51E1).